The following is a 418-amino-acid chain: Voltage-gated ClC-type chloride channel ClcB (418 aa).

10 helical membrane-spanning segments follow: residues leucine 5–alanine 25, leucine 54–phenylalanine 74, leucine 146–glycine 166, leucine 168–isoleucine 188, alanine 222–methionine 242, tryptophan 258–tryptophan 278, alanine 291–alanine 311, glycine 316–tyrosine 336, leucine 352–methionine 372, and methionine 380–isoleucine 400.

It belongs to the chloride channel (TC 2.A.49) family. ClcB subfamily.

The protein resides in the cell inner membrane. Functionally, probably acts as an electrical shunt for an outwardly-directed proton pump that is linked to amino acid decarboxylation, as part of the extreme acid resistance (XAR) response. The chain is Voltage-gated ClC-type chloride channel ClcB from Escherichia coli O17:K52:H18 (strain UMN026 / ExPEC).